Reading from the N-terminus, the 580-residue chain is Myb-like protein C (580 aa).

Disordered stretches follow at residues 1 to 58 (MTMI…YGSN), 73 to 101 (QYSISSPSPKKRPFNSTMTTSPPTPTLLS), 121 to 203 (NVYN…SSTN), and 354 to 380 (SDNDSNQKKKRERIRKSVSRGLRNPPN). Low complexity-rich tracts occupy residues 20 to 47 (NNNNNNSNNSSNNNSNNNSNNNNNNNNN), 87 to 101 (NSTMTTSPPTPTLLS), and 126 to 203 (PHQS…SSTN). A compositionally biased stretch (basic residues) spans 361–371 (KKKRERIRKSV). 2 HTH myb-type domains span residues 368–430 (RKSV…CPAI) and 431–482 (RKGS…SREV). 2 DNA-binding regions (H-T-H motif) span residues 402–426 (WKKIAHQIGGGKTGAQCAQHWKRVL) and 454–478 (WKNVASEIRTRTDIQCRYQYFKSCM). The Myb-like domain maps to 484-546 (WSSREDEILQ…ECKTRYFQLN (63 aa)).

Its subcellular location is the nucleus. Transcription activator required for the culmination, at the time of the fruiting body formation. Regulates genes involved in the cell differentiation within the fruiting body. The protein is Myb-like protein C (mybC) of Dictyostelium discoideum (Social amoeba).